The primary structure comprises 46 residues: Putative antitoxin VapB3 (46 aa).

Belongs to the UPF0165 family.

Functionally, possibly the antitoxin component of a type II toxin-antitoxin (TA) system. Its cognate toxin is VapC3 (Potential). The chain is Putative antitoxin VapB3 (vapB3) from Pyrococcus furiosus (strain ATCC 43587 / DSM 3638 / JCM 8422 / Vc1).